Here is a 639-residue protein sequence, read N- to C-terminus: C-type lectin domain-containing protein 160 (639 aa).

Residues 1 to 19 form the signal peptide; that stretch reads MDLKSWILLSCTLLPLSVT. VWFA domains are found at residues 31-178 and 289-474; these read DIII…VGIG and DIIF…LCQV. In terms of domain architecture, C-type lectin spans 491 to 618; sequence KYGECFFPTK…WNSVSCTSEY (128 aa). C594 and C614 form a disulfide bridge.

It is found in the secreted. The protein is C-type lectin domain-containing protein 160 (clec-160) of Caenorhabditis elegans.